The primary structure comprises 756 residues: Cholesterol uptake protein 1 (756 aa).

The first 18 residues, 1-18 (MRTSQAIFILIFLDSVRN), serve as a signal peptide directing secretion. Residues 19–268 (QSPQVIPAKW…TIESSMKIFD (250 aa)) lie on the Extracellular side of the membrane. Asparagine 39 and asparagine 63 each carry an N-linked (GlcNAc...) asparagine glycan. The Cholesterol-binding sequence motif signature appears at 124–129 (VHYNFR). Asparagine 140, asparagine 174, and asparagine 257 each carry an N-linked (GlcNAc...) asparagine glycan. A helical transmembrane segment spans residues 269–289 (YTIPIVFWACILLLVTIVVFV). At 290–373 (YHYFDGIWER…YEERELKYDV (84 aa)) the chain is on the cytoplasmic side. A helical membrane pass occupies residues 374 to 394 (YKIALAIIGIFYNITVLQLII). Topologically, residues 395-421 (SKAGSLRQSGDLDECTFNFQCARPLWY) are extracellular. Residues 422-442 (FVAFNNVVSNGGYVYFGTLII) traverse the membrane as a helical segment. Residues 443–473 (VMNYCRERSFRRLFAVQPTLAERYGLPQHSG) are Cytoplasmic-facing. A helical transmembrane segment spans residues 474-494 (LMTAIGLAVIMEGISSATYHV). The Extracellular segment spans residues 495–498 (CPNN). The helical transmembrane segment at 499 to 517 (INYQFDTALMYVIGMLGKL) threads the bilayer. At 518 to 530 (KIWSLRHPDMVVS) the chain is on the cytoplasmic side. The chain crosses the membrane as a helical span at residues 531–551 (AYHAFGFLGVFLMAAIAGVYV). The Extracellular portion of the chain corresponds to 552–554 (HNM). Residues 555–575 (IFWALFSIIYIASMLLVSLEF) form a helical membrane-spanning segment. A Cholesterol-binding sequence motif motif is present at residues 570 to 578 (LVSLEFYFK). At 576 to 612 (YFKGIWTLNLRELRNSIRLSWVSSRHLSCVVPAYKAR) the chain is on the cytoplasmic side. Residues 613–633 (FFVILLLNIANTAVVVYGLEA) traverse the membrane as a helical segment. The Extracellular segment spans residues 634–637 (HPKD). A helical transmembrane segment spans residues 638-658 (FLSFLLIPFIGNLFIYIIYYI). The Cytoplasmic segment spans residues 659-671 (LMKMIYREKIPKR). The chain crosses the membrane as a helical span at residues 672-692 (AIALLFAAVISWTCAGILFNQ). The Extracellular portion of the chain corresponds to 693–728 (RVSDWSKMPAISRELNKPCIFLNFYDNHDLWHLSSA). Residues 729–749 (FAIFFSFTAINVIDDDLMFVM) traverse the membrane as a helical segment. Topologically, residues 750-756 (RNTIRVF) are cytoplasmic.

The protein belongs to the SID1 family. Highly expressed along the intestine with expression also detected in the pharynx, especially at the terminal bulb, and in the excretory gland cells.

The protein resides in the cell membrane. It catalyses the reaction cholesterol(in) = cholesterol(out). Its function is as follows. Cholesterol-binding protein which is involved in dietary cholesterol uptake from the environment. Does not play a role in double-stranded RNA transport in contrast to other SID1 family members. This Caenorhabditis elegans protein is Cholesterol uptake protein 1.